Reading from the N-terminus, the 397-residue chain is Histidinol-phosphate aminotransferase (397 aa).

Position 247 is an N6-(pyridoxal phosphate)lysine (K247).

It belongs to the class-II pyridoxal-phosphate-dependent aminotransferase family. Histidinol-phosphate aminotransferase subfamily. As to quaternary structure, homodimer. The cofactor is pyridoxal 5'-phosphate.

It carries out the reaction L-histidinol phosphate + 2-oxoglutarate = 3-(imidazol-4-yl)-2-oxopropyl phosphate + L-glutamate. It functions in the pathway amino-acid biosynthesis; L-histidine biosynthesis; L-histidine from 5-phospho-alpha-D-ribose 1-diphosphate: step 7/9. The chain is Histidinol-phosphate aminotransferase from Frankia casuarinae (strain DSM 45818 / CECT 9043 / HFP020203 / CcI3).